Reading from the N-terminus, the 307-residue chain is Ventral anterior homeobox 2 (307 aa).

Disordered stretches follow at residues 1-70, 155-175, and 197-254; these read MFDQ…DKLL, RTKQ…STSE, and PPPN…PSPR. Positions 25–38 are enriched in basic and acidic residues; the sequence is CRDRGRESKSRTEV. A compositionally biased stretch (low complexity) spans 46–62; that stretch reads SSTDTPGTSASTPTSSS. Positions 103–162 form a DNA-binding region, homeobox; that stretch reads PKRTRTSFTAEQLYRLELEFQRCQYVVGRERTELARQLNLSETQVKVWFQNRRTKQKKDQ. Positions 159–170 are enriched in basic and acidic residues; the sequence is KKDQTKDTDKRS. Residues 202 to 249 are compositionally biased toward low complexity; it reads LLAHPHPGNGSLLGSPSVSTSSGVSSSTTPPGAGSGTFGLSLSSLSGT.

This sequence belongs to the EMX homeobox family. As to expression, expressed in the anterior neural keel and later in the preoptic area, optic stalk and ventral retina.

It localises to the nucleus. In terms of biological role, transcription factor that may function in dorsoventral specification of the forebrain. Required for closure of the choroid fissure and together with vax1 is required for optic nerve differentiation and to limit retinal development to the optic cup. The sequence is that of Ventral anterior homeobox 2 (vax2) from Danio rerio (Zebrafish).